A 97-amino-acid polypeptide reads, in one-letter code: Osteocalcin (97 aa).

The first 18 residues, 1 to 18 (MKTLAILVLCSLAAICLT), serve as a signal peptide directing secretion. The propeptide occupies 19–52 (SSASAGAQPAGDSPVQGGLFMEKDQASAVVRQTR). Residues 53 to 93 (AAKELTLAQTESLREVCETNMACDEMADAQGIVAAYQAFYG) enclose the Gla domain. Glu-63, Glu-67, Glu-70, and Asp-76 together coordinate Ca(2+). 4-carboxyglutamate occurs at positions 63, 67, and 70. An intrachain disulfide couples Cys-69 to Cys-75. Glu-77 bears the 4-carboxyglutamate mark.

Belongs to the osteocalcin/matrix Gla protein family. Post-translationally, gamma-carboxyglutamate residues are formed by vitamin K dependent carboxylation by GGCX. These residues are essential for the binding of calcium. As to expression, in the branchial arches, BGP is found outside the chondrocyte-containing zone. It is found in some cells in the basal zone of the branchial filaments, near the branchial arches, and within the extracellular matrix in the medial zone. In the vertebra, BGP is found in the mineralized bone matrix.

Its subcellular location is the secreted. Its function is as follows. The carboxylated form is one of the main organic components of the bone matrix, which constitutes 1-2% of the total bone protein. The carboxylated form binds strongly to apatite and calcium. This is Osteocalcin (bglap) from Argyrosomus regius (Meagre).